Reading from the N-terminus, the 57-residue chain is Delta-elapitoxin-Cb1a (57 aa).

Disulfide bonds link cysteine 3–cysteine 22, cysteine 15–cysteine 36, cysteine 40–cysteine 49, and cysteine 50–cysteine 55.

Belongs to the three-finger toxin family. Short-chain subfamily. As to expression, expressed by the venom gland.

The protein resides in the secreted. Its function is as follows. This toxin shifts the voltage-dependence of Nav1.4/SCN4A activation to more hyperpolarised potentials, inhibits inactivation, and produces large ramp currents, consistent with its profound effects on contractile force in an isolated skeletal muscle preparation. This toxin produces large muscle contractions and fasciculations in the indirectly stimulated chick biventer cervicis nerve-muscle assay, which are significantly inhibited by the addition of the sodium channel antagonist tetrodotoxin. In Calliophis bivirgatus (Blue Malaysian coral snake), this protein is Delta-elapitoxin-Cb1a.